Consider the following 121-residue polypeptide: Dihydroneopterin aldolase (121 aa).

Substrate contacts are provided by residues glutamate 22, tyrosine 54, and 73-74; that span reads LE. The active-site Proton donor/acceptor is the lysine 100.

This sequence belongs to the DHNA family. In terms of assembly, homooctamer. Four molecules assemble into a ring, and two rings come together to give a cylinder with a hole of at least 13 a diameter.

The enzyme catalyses 7,8-dihydroneopterin = 6-hydroxymethyl-7,8-dihydropterin + glycolaldehyde. It catalyses the reaction 7,8-dihydroneopterin = 7,8-dihydromonapterin. The protein operates within cofactor biosynthesis; tetrahydrofolate biosynthesis; 2-amino-4-hydroxy-6-hydroxymethyl-7,8-dihydropteridine diphosphate from 7,8-dihydroneopterin triphosphate: step 3/4. Catalyzes the conversion of 7,8-dihydroneopterin to 6-hydroxymethyl-7,8-dihydropterin. Can also catalyze the epimerization of carbon 2' of dihydroneopterin to dihydromonapterin. The protein is Dihydroneopterin aldolase (folB) of Staphylococcus aureus (strain COL).